Consider the following 250-residue polypeptide: Ribonucleotide monophosphatase NagD (250 aa).

Mg(2+) is bound by residues aspartate 9 and aspartate 11. Residue aspartate 11 is part of the active site. Residues aspartate 11, 42–43 (TN), and lysine 176 each bind substrate. Aspartate 201 is a Mg(2+) binding site. Residue 202–205 (NLRT) coordinates substrate.

It belongs to the HAD-like hydrolase superfamily. NagD family. In terms of assembly, monomer. The cofactor is Mg(2+). Mn(2+) serves as cofactor. Requires Co(2+) as cofactor. Zn(2+) is required as a cofactor.

It catalyses the reaction a ribonucleoside 5'-phosphate + H2O = a ribonucleoside + phosphate. Functionally, catalyzes the dephosphorylation of an unusually broad range of substrate including deoxyribo- and ribonucleoside tri-, di-, and monophosphates, as well as polyphosphate and glucose-1-P (Glu1P). In Escherichia coli O157:H7, this protein is Ribonucleotide monophosphatase NagD (nagD).